The following is a 1004-amino-acid chain: Bifunctional glutamine synthetase adenylyltransferase/adenylyl-removing enzyme (1004 aa).

Positions 1–496 (MVRPPSARSA…LHAKLFYRPL (496 aa)) are adenylyl removase. The segment at 502-1004 (RMDPDALRLS…RAVVERVFGS (503 aa)) is adenylyl transferase.

This sequence belongs to the GlnE family. Requires Mg(2+) as cofactor.

It carries out the reaction [glutamine synthetase]-O(4)-(5'-adenylyl)-L-tyrosine + phosphate = [glutamine synthetase]-L-tyrosine + ADP. The enzyme catalyses [glutamine synthetase]-L-tyrosine + ATP = [glutamine synthetase]-O(4)-(5'-adenylyl)-L-tyrosine + diphosphate. Its function is as follows. Involved in the regulation of glutamine synthetase GlnA, a key enzyme in the process to assimilate ammonia. When cellular nitrogen levels are high, the C-terminal adenylyl transferase (AT) inactivates GlnA by covalent transfer of an adenylyl group from ATP to specific tyrosine residue of GlnA, thus reducing its activity. Conversely, when nitrogen levels are low, the N-terminal adenylyl removase (AR) activates GlnA by removing the adenylyl group by phosphorolysis, increasing its activity. The regulatory region of GlnE binds the signal transduction protein PII (GlnB) which indicates the nitrogen status of the cell. This is Bifunctional glutamine synthetase adenylyltransferase/adenylyl-removing enzyme from Nocardia farcinica (strain IFM 10152).